The following is a 166-amino-acid chain: MFPMVTEFINYGQQTVRAARYIGQGFMITLSHANRLPVTIQYPYEKLITSERFRGRIHFEFDKCIACEVCVRVCPIDLPVVDWKLETDIRKKRLLNYSIDFGICIFCGNCVEYCPTNCLSMTEEYELSTYDRHELNYNQIALGRLPMSIIDDYTIRTILNLPEIKT.

2 consecutive 4Fe-4S ferredoxin-type domains span residues 55–84 and 95–124; these read GRIH…VDWK and LNYS…MTEE. The [4Fe-4S] cluster site is built by cysteine 64, cysteine 67, cysteine 70, cysteine 74, cysteine 104, cysteine 107, cysteine 110, and cysteine 114.

The protein belongs to the complex I 23 kDa subunit family. NDH is composed of at least 16 different subunits, 5 of which are encoded in the nucleus. Requires [4Fe-4S] cluster as cofactor.

Its subcellular location is the plastid. It localises to the chloroplast thylakoid membrane. The catalysed reaction is a plastoquinone + NADH + (n+1) H(+)(in) = a plastoquinol + NAD(+) + n H(+)(out). The enzyme catalyses a plastoquinone + NADPH + (n+1) H(+)(in) = a plastoquinol + NADP(+) + n H(+)(out). NDH shuttles electrons from NAD(P)H:plastoquinone, via FMN and iron-sulfur (Fe-S) centers, to quinones in the photosynthetic chain and possibly in a chloroplast respiratory chain. The immediate electron acceptor for the enzyme in this species is believed to be plastoquinone. Couples the redox reaction to proton translocation, and thus conserves the redox energy in a proton gradient. The sequence is that of NAD(P)H-quinone oxidoreductase subunit I, chloroplastic from Laphamia lindheimeri (Lindheimer's rockdaisy).